Here is a 312-residue protein sequence, read N- to C-terminus: Aspartate carbamoyltransferase catalytic subunit (312 aa).

Residues arginine 55 and threonine 56 each coordinate carbamoyl phosphate. Residue lysine 83 coordinates L-aspartate. Residues arginine 105, histidine 138, and glutamine 141 each contribute to the carbamoyl phosphate site. L-aspartate is bound by residues arginine 171 and arginine 225. The carbamoyl phosphate site is built by glycine 266 and proline 267.

This sequence belongs to the aspartate/ornithine carbamoyltransferase superfamily. ATCase family. Heterododecamer (2C3:3R2) of six catalytic PyrB chains organized as two trimers (C3), and six regulatory PyrI chains organized as three dimers (R2).

It catalyses the reaction carbamoyl phosphate + L-aspartate = N-carbamoyl-L-aspartate + phosphate + H(+). The protein operates within pyrimidine metabolism; UMP biosynthesis via de novo pathway; (S)-dihydroorotate from bicarbonate: step 2/3. Its function is as follows. Catalyzes the condensation of carbamoyl phosphate and aspartate to form carbamoyl aspartate and inorganic phosphate, the committed step in the de novo pyrimidine nucleotide biosynthesis pathway. The polypeptide is Aspartate carbamoyltransferase catalytic subunit (Corynebacterium glutamicum (strain R)).